The chain runs to 250 residues: Geranylgeranylglyceryl phosphate synthase (250 aa).

Mg(2+) is bound by residues D23 and S52. Residues 170 to 176 (YIEAGSG), 202 to 203 (GG), and 224 to 225 (GT) contribute to the sn-glycerol 1-phosphate site.

This sequence belongs to the GGGP/HepGP synthase family. Group II subfamily. Requires Mg(2+) as cofactor.

The protein localises to the cytoplasm. The catalysed reaction is sn-glycerol 1-phosphate + (2E,6E,10E)-geranylgeranyl diphosphate = sn-3-O-(geranylgeranyl)glycerol 1-phosphate + diphosphate. The protein operates within membrane lipid metabolism; glycerophospholipid metabolism. Functionally, prenyltransferase that catalyzes the transfer of the geranylgeranyl moiety of geranylgeranyl diphosphate (GGPP) to the C3 hydroxyl of sn-glycerol-1-phosphate (G1P). This reaction is the first ether-bond-formation step in the biosynthesis of archaeal membrane lipids. The protein is Geranylgeranylglyceryl phosphate synthase of Methanobrevibacter smithii (strain ATCC 35061 / DSM 861 / OCM 144 / PS).